Consider the following 144-residue polypeptide: Flagellar assembly factor FliW (144 aa).

It belongs to the FliW family. As to quaternary structure, interacts with translational regulator CsrA and flagellin(s).

It is found in the cytoplasm. Its function is as follows. Acts as an anti-CsrA protein, binds CsrA and prevents it from repressing translation of its target genes, one of which is flagellin. Binds to flagellin and participates in the assembly of the flagellum. This Bacillus pumilus (strain SAFR-032) protein is Flagellar assembly factor FliW.